The sequence spans 138 residues: Protein FAM136A (138 aa).

This sequence belongs to the FAM136 family.

The chain is Protein FAM136A (fam136a) from Xenopus laevis (African clawed frog).